Here is a 101-residue protein sequence, read N- to C-terminus: Large ribosomal subunit protein bL21 (101 aa).

Belongs to the bacterial ribosomal protein bL21 family. In terms of assembly, part of the 50S ribosomal subunit. Contacts protein L20.

This protein binds to 23S rRNA in the presence of protein L20. The polypeptide is Large ribosomal subunit protein bL21 (Corynebacterium efficiens (strain DSM 44549 / YS-314 / AJ 12310 / JCM 11189 / NBRC 100395)).